A 230-amino-acid polypeptide reads, in one-letter code: Probable nicotinate-nucleotide adenylyltransferase (230 aa).

The protein belongs to the NadD family.

The catalysed reaction is nicotinate beta-D-ribonucleotide + ATP + H(+) = deamido-NAD(+) + diphosphate. It participates in cofactor biosynthesis; NAD(+) biosynthesis; deamido-NAD(+) from nicotinate D-ribonucleotide: step 1/1. Functionally, catalyzes the reversible adenylation of nicotinate mononucleotide (NaMN) to nicotinic acid adenine dinucleotide (NaAD). The protein is Probable nicotinate-nucleotide adenylyltransferase of Pseudomonas putida (strain ATCC 47054 / DSM 6125 / CFBP 8728 / NCIMB 11950 / KT2440).